We begin with the raw amino-acid sequence, 246 residues long: Nodulation protein G (246 aa).

8 to 32 contributes to the NAD(+) binding site; sequence VTGAMGGLGTAICQALAKDGCIVAA. A substrate-binding site is contributed by serine 140. Tyrosine 153 functions as the Proton acceptor in the catalytic mechanism.

This sequence belongs to the short-chain dehydrogenases/reductases (SDR) family.

Functionally, proposed to modify Nod factor fatty acyl chain. The sequence is that of Nodulation protein G (nodG) from Azospirillum brasilense.